A 257-amino-acid chain; its full sequence is 1-(5-phosphoribosyl)-5-[(5-phosphoribosylamino)methylideneamino] imidazole-4-carboxamide isomerase (257 aa).

The active-site Proton acceptor is the Asp-8. The active-site Proton donor is the Asp-129.

The protein belongs to the HisA/HisF family.

It localises to the cytoplasm. The catalysed reaction is 1-(5-phospho-beta-D-ribosyl)-5-[(5-phospho-beta-D-ribosylamino)methylideneamino]imidazole-4-carboxamide = 5-[(5-phospho-1-deoxy-D-ribulos-1-ylimino)methylamino]-1-(5-phospho-beta-D-ribosyl)imidazole-4-carboxamide. The protein operates within amino-acid biosynthesis; L-histidine biosynthesis; L-histidine from 5-phospho-alpha-D-ribose 1-diphosphate: step 4/9. In Rippkaea orientalis (strain PCC 8801 / RF-1) (Cyanothece sp. (strain PCC 8801)), this protein is 1-(5-phosphoribosyl)-5-[(5-phosphoribosylamino)methylideneamino] imidazole-4-carboxamide isomerase.